Reading from the N-terminus, the 633-residue chain is Threonine--tRNA ligase (633 aa).

The tract at residues 1–143 is editing domain; it reads MRALFLHSNR…SRTIKPKKVK (143 aa). 2 catalytic regions span residues 220–515 and 221–515; these read NPLN…PVLP and PLND…PVLP. The Zn(2+) site is built by Cys-314, His-365, and His-488.

The protein belongs to the class-II aminoacyl-tRNA synthetase family. In terms of assembly, homodimer. Zn(2+) is required as a cofactor.

Its subcellular location is the cytoplasm. It catalyses the reaction tRNA(Thr) + L-threonine + ATP = L-threonyl-tRNA(Thr) + AMP + diphosphate + H(+). Functionally, catalyzes the attachment of threonine to tRNA(Thr) in a two-step reaction: L-threonine is first activated by ATP to form Thr-AMP and then transferred to the acceptor end of tRNA(Thr). Also edits incorrectly charged L-seryl-tRNA(Thr). The chain is Threonine--tRNA ligase from Nanoarchaeum equitans (strain Kin4-M).